We begin with the raw amino-acid sequence, 796 residues long: Phenylalanine--tRNA ligase beta subunit (796 aa).

One can recognise a tRNA-binding domain in the interval 39 to 149 (SAALKSFRVA…GDAPLGTTFA (111 aa)). The B5 domain occupies 398 to 470 (LARKALAYDP…RVHGLDAVPS (73 aa)). The Mg(2+) site is built by Asp-448, Asp-454, Glu-457, and Glu-458. Positions 703 to 795 (PALQAVTRDF…AAGKLGAELR (93 aa)) constitute an FDX-ACB domain.

It belongs to the phenylalanyl-tRNA synthetase beta subunit family. Type 1 subfamily. In terms of assembly, tetramer of two alpha and two beta subunits. Mg(2+) is required as a cofactor.

The protein resides in the cytoplasm. It catalyses the reaction tRNA(Phe) + L-phenylalanine + ATP = L-phenylalanyl-tRNA(Phe) + AMP + diphosphate + H(+). The protein is Phenylalanine--tRNA ligase beta subunit of Novosphingobium aromaticivorans (strain ATCC 700278 / DSM 12444 / CCUG 56034 / CIP 105152 / NBRC 16084 / F199).